The primary structure comprises 2143 residues: Proteasome activator BLM10 (2143 aa).

Positions 1–65 are disordered; that stretch reads MTANNDDDIK…SPLRARSATP (65 aa). 4 positions are modified to phosphoserine: Ser-11, Ser-29, Ser-56, and Ser-62. Residues Thr-64 and Thr-66 each carry the phosphothreonine modification. A Phosphoserine modification is found at Ser-1041. The stretch at 1316-1355 is one HEAT 1 repeat; that stretch reads VVINKIIPSLEKAIKDHDYMKIQVILNVLLIKKIHRKLMT. The tract at residues 1648 to 1732 is bromodomain-like (BRDL); it reads CELNMSDLFE…LAWWLPAVVD (85 aa). 3 HEAT repeats span residues 1779-1814, 1902-1941, and 1985-2023; these read PDVG…NQSN, YLVD…MPIR, and EEKN…NWKE. A YYX motif motif is present at residues 2141–2143; it reads YYA.

The protein belongs to the BLM10 family. In terms of assembly, according to PubMed:12973301, colocalizes with nascent proteasome. According to PubMed:15778719, associates with proteasome core particles and also forms a complex with regulatory particle-core particle (RP-CP).

The protein resides in the nucleus. It localises to the cytoplasm. Its function is as follows. Associated component of the proteasome that specifically recognizes acetylated histones and promotes ATP- and ubiquitin-independent degradation of core histones during DNA damage response. Recognizes and binds acetylated histones via its bromodomain-like (BRDL) region and activates the proteasome by opening the gated channel for substrate entry. Binds to the core proteasome via its C-terminus, which occupies the same binding sites as the proteasomal ATPases, opening the closed structure of the proteasome via an active gating mechanism. Involved in DNA damage response in somatic cells: binds to acetylated histones and promotes degradation of histones following DNA double-strand breaks. In Saccharomyces cerevisiae (strain ATCC 204508 / S288c) (Baker's yeast), this protein is Proteasome activator BLM10 (BLM10).